The sequence spans 335 residues: Fructose-1,6-bisphosphatase class 1 (335 aa).

Residues E90, D112, L114, and D115 each contribute to the Mg(2+) site. Substrate contacts are provided by residues 115 to 118 (DGSS), N210, and K276. Position 282 (E282) interacts with Mg(2+).

Belongs to the FBPase class 1 family. Homotetramer. Requires Mg(2+) as cofactor.

It localises to the cytoplasm. It carries out the reaction beta-D-fructose 1,6-bisphosphate + H2O = beta-D-fructose 6-phosphate + phosphate. It participates in carbohydrate biosynthesis; gluconeogenesis. In Ectopseudomonas mendocina (strain ymp) (Pseudomonas mendocina), this protein is Fructose-1,6-bisphosphatase class 1.